The primary structure comprises 189 residues: Interferon alpha-B (189 aa).

The N-terminal stretch at 1–23 is a signal peptide; it reads MAPAWSFLLALLLLSCNAICSLG. Intrachain disulfides connect cysteine 24-cysteine 122 and cysteine 52-cysteine 162.

This sequence belongs to the alpha/beta interferon family.

Its subcellular location is the secreted. Functionally, produced by macrophages, IFN-alpha have antiviral activities. Interferon stimulates the production of two enzymes: a protein kinase and an oligoadenylate synthetase. This chain is Interferon alpha-B (IFNAB), found in Bos taurus (Bovine).